Here is a 316-residue protein sequence, read N- to C-terminus: Aspartate carbamoyltransferase catalytic subunit (316 aa).

Residues arginine 56 and threonine 57 each coordinate carbamoyl phosphate. An L-aspartate-binding site is contributed by lysine 84. Arginine 106, histidine 139, and glutamine 142 together coordinate carbamoyl phosphate. L-aspartate contacts are provided by arginine 172 and arginine 224. Carbamoyl phosphate contacts are provided by glycine 268 and proline 269.

The protein belongs to the aspartate/ornithine carbamoyltransferase superfamily. ATCase family. In terms of assembly, heterododecamer (2C3:3R2) of six catalytic PyrB chains organized as two trimers (C3), and six regulatory PyrI chains organized as three dimers (R2).

It carries out the reaction carbamoyl phosphate + L-aspartate = N-carbamoyl-L-aspartate + phosphate + H(+). It participates in pyrimidine metabolism; UMP biosynthesis via de novo pathway; (S)-dihydroorotate from bicarbonate: step 2/3. Functionally, catalyzes the condensation of carbamoyl phosphate and aspartate to form carbamoyl aspartate and inorganic phosphate, the committed step in the de novo pyrimidine nucleotide biosynthesis pathway. This Ligilactobacillus salivarius (strain UCC118) (Lactobacillus salivarius) protein is Aspartate carbamoyltransferase catalytic subunit.